A 431-amino-acid chain; its full sequence is Adenylosuccinate synthetase (431 aa).

GTP-binding positions include 13–19 (GDEGKGK) and 41–43 (GHT). Asp-14 acts as the Proton acceptor in catalysis. Residues Asp-14 and Gly-41 each contribute to the Mg(2+) site. IMP is bound by residues 14–17 (DEGK), 39–42 (NAGH), Thr-130, Arg-144, Gln-225, Thr-240, and Arg-304. His-42 (proton donor) is an active-site residue. 300–306 (ATTGRKR) lines the substrate pocket. Residues Arg-306, 332–334 (KLD), and 415–417 (STG) contribute to the GTP site.

Belongs to the adenylosuccinate synthetase family. In terms of assembly, homodimer. It depends on Mg(2+) as a cofactor.

It localises to the cytoplasm. It catalyses the reaction IMP + L-aspartate + GTP = N(6)-(1,2-dicarboxyethyl)-AMP + GDP + phosphate + 2 H(+). It participates in purine metabolism; AMP biosynthesis via de novo pathway; AMP from IMP: step 1/2. In terms of biological role, plays an important role in the de novo pathway of purine nucleotide biosynthesis. Catalyzes the first committed step in the biosynthesis of AMP from IMP. In Shewanella halifaxensis (strain HAW-EB4), this protein is Adenylosuccinate synthetase.